We begin with the raw amino-acid sequence, 196 residues long: Thymidine kinase (196 aa).

17-24 (GPMFAGKT) is a binding site for ATP. The Proton acceptor role is filled by Glu-92. Phe-121 contacts substrate. Cys-146 and Cys-149 together coordinate Zn(2+). 166-170 (LILAG) lines the substrate pocket. Zn(2+) contacts are provided by Cys-179 and Cys-182.

This sequence belongs to the thymidine kinase family.

The catalysed reaction is thymidine + ATP = dTMP + ADP + H(+). Its function is as follows. Phosphorylates thymidine. ASFV replicates in the cytoplasm of infected cells and contains genes encoding a number of enzymes needed for DNA synthesis, including thymidine kinase. Important for growth in swine macrophages in vitro and is a virus virulence factor in swine. This is Thymidine kinase from Ornithodoros (relapsing fever ticks).